A 354-amino-acid polypeptide reads, in one-letter code: Serum paraoxonase/arylesterase 2 (354 aa).

An N-linked (GlcNAc...) asparagine glycan is attached at Asn-29. A disulfide bridge links Cys-42 with Cys-352. 2 residues coordinate Ca(2+): Glu-53 and Asp-54. The active-site Proton acceptor is His-114. 4 residues coordinate Ca(2+): Ile-116, Asn-167, Asp-168, and Asn-223. Residue Asn-254 is glycosylated (N-linked (GlcNAc...) asparagine). Ca(2+)-binding residues include Asp-268 and Asn-269. N-linked (GlcNAc...) asparagine glycans are attached at residues Asn-269 and Asn-323.

This sequence belongs to the paraoxonase family. The cofactor is Ca(2+). Post-translationally, glycosylated. In terms of processing, the signal sequence is not cleaved.

It is found in the membrane. The enzyme catalyses a phenyl acetate + H2O = a phenol + acetate + H(+). The catalysed reaction is An aryl dialkyl phosphate + H2O = dialkyl phosphate + an aryl alcohol.. The absence of paraoxonase activity in turkey and chicken blood and in turkey liver indicates that PON2, if expressed, does not hydrolyze paraoxon. The polypeptide is Serum paraoxonase/arylesterase 2 (PON2) (Gallus gallus (Chicken)).